The sequence spans 106 residues: YcgL domain-containing protein PsycPRwf_1721 (106 aa).

The 94-residue stretch at 1-94 (MHCDIYKFPK…PSDVLLAQAQ (94 aa)) folds into the YcgL domain.

In Psychrobacter sp. (strain PRwf-1), this protein is YcgL domain-containing protein PsycPRwf_1721.